We begin with the raw amino-acid sequence, 358 residues long: Probable ABC transporter periplasmic-binding protein y4fP (358 aa).

Residues 1 to 46 (MRNVIKLTWSRRKRSASLDKGENIMKLAFAFATAAIVVAAAFPALA) form the signal peptide.

The protein belongs to the bacterial solute-binding protein 1 family.

It localises to the periplasm. Probably part of the binding-protein-dependent transport system y4fNOP. This chain is Probable ABC transporter periplasmic-binding protein y4fP, found in Sinorhizobium fredii (strain NBRC 101917 / NGR234).